Here is a 440-residue protein sequence, read N- to C-terminus: MSEFSQTVPELVAWARKNDFSISLPVDRLSFLLAVATLNGERLDGEMSEGELVDAFRHVSDAFEQTSETIGVRANNAINDMVRQRLLNRFTSEQAEGNAIYRLTPLGIGITDYYIRQREFSTLRLSMQLSIVAGELKRAADAAEEGGDEFHWHRNVYAPLKYSVAEIFDSIDLTQRLMDEQQQQVKDDIAQLLNKDWRAAISSCELLLSETSGTLRELQDTLEAAGDKLQANLLRIQDATMPHDDLHFVDRLVFDLQSKLDRIISWGQQSIDLWIGYDRHVHKFIRTAIDMDKNRVFAQRLRQSVQTYFDEPWALTYANADRLLDMRDEEMALRDEEVTGELPEDLEYEEFNEIREQLAAIIEEQLAVYKTRQVPLDLGLVVREYLSQYPRARHFDVARIVIDQAVRLGVAQADFTGLPAKWQPINDYGAKVQAHVIDKY.

Positions 208–236 are leucine-zipper; the sequence is LSETSGTLRELQDTLEAAGDKLQANLLRI.

Belongs to the MukF family. As to quaternary structure, interacts, and probably forms a ternary complex, with MukE and MukB via its C-terminal region. The complex formation is stimulated by calcium or magnesium. It is required for an interaction between MukE and MukB.

It is found in the cytoplasm. It localises to the nucleoid. Involved in chromosome condensation, segregation and cell cycle progression. May participate in facilitating chromosome segregation by condensation DNA from both sides of a centrally located replisome during cell division. Not required for mini-F plasmid partitioning. Probably acts via its interaction with MukB and MukE. Overexpression results in anucleate cells. It has a calcium binding activity. This chain is Chromosome partition protein MukF, found in Shigella boydii serotype 18 (strain CDC 3083-94 / BS512).